The following is a 176-amino-acid chain: Disulfide bond formation protein B (176 aa).

At 1-14 the chain is on the cytoplasmic side; the sequence is MLRFLNQCSQGRGA. The chain crosses the membrane as a helical span at residues 15-31; sequence WLLMAFTALALELTALW. The Periplasmic segment spans residues 32–49; it reads FQHVMLLKPCVLCIYERC. C41 and C44 are disulfide-bonded. Residues 50-65 form a helical membrane-spanning segment; sequence ALFGVLGAALIGAIAP. The Cytoplasmic segment spans residues 66 to 71; that stretch reads KTPLRY. A helical membrane pass occupies residues 72 to 89; the sequence is VAMVIWLYSAFRGVQLTY. At 90 to 144 the chain is on the periplasmic side; that stretch reads EHTMLQLYPSPFATCDFMVRFPEWLPLDKWVPQVFVASGDCAERQWDFLGMEMPQ. A disulfide bond links C104 and C130. The helical transmembrane segment at 145-163 threads the bilayer; it reads WLLGIFIAYLIVAVLVVIS. The Cytoplasmic segment spans residues 164-176; it reads QPFKAKKRDLFGR.

Belongs to the DsbB family.

It localises to the cell inner membrane. In terms of biological role, required for disulfide bond formation in some periplasmic proteins such as PhoA or OmpA. Acts by oxidizing the DsbA protein. The protein is Disulfide bond formation protein B of Shigella flexneri.